Consider the following 860-residue polypeptide: DNA mismatch repair protein MutS (860 aa).

618–625 contacts ATP; that stretch reads GPNMGGKS.

Belongs to the DNA mismatch repair MutS family.

Its function is as follows. This protein is involved in the repair of mismatches in DNA. It is possible that it carries out the mismatch recognition step. This protein has a weak ATPase activity. The protein is DNA mismatch repair protein MutS of Shewanella piezotolerans (strain WP3 / JCM 13877).